Consider the following 207-residue polypeptide: Uridine kinase (207 aa).

13 to 20 (GASGSGKT) lines the ATP pocket.

Belongs to the uridine kinase family.

It is found in the cytoplasm. The catalysed reaction is uridine + ATP = UMP + ADP + H(+). The enzyme catalyses cytidine + ATP = CMP + ADP + H(+). It functions in the pathway pyrimidine metabolism; CTP biosynthesis via salvage pathway; CTP from cytidine: step 1/3. The protein operates within pyrimidine metabolism; UMP biosynthesis via salvage pathway; UMP from uridine: step 1/1. This is Uridine kinase from Ureaplasma urealyticum serovar 10 (strain ATCC 33699 / Western).